The primary structure comprises 107 residues: Nucleoid-associated protein PHZ_c0369 (107 aa).

The protein belongs to the YbaB/EbfC family. In terms of assembly, homodimer.

It localises to the cytoplasm. The protein resides in the nucleoid. In terms of biological role, binds to DNA and alters its conformation. May be involved in regulation of gene expression, nucleoid organization and DNA protection. The protein is Nucleoid-associated protein PHZ_c0369 of Phenylobacterium zucineum (strain HLK1).